The chain runs to 450 residues: Phosphoglucosamine mutase (450 aa).

Catalysis depends on Ser-101, which acts as the Phosphoserine intermediate. Ser-101, Asp-241, Asp-243, and Asp-245 together coordinate Mg(2+). Ser-101 is subject to Phosphoserine.

It belongs to the phosphohexose mutase family. Requires Mg(2+) as cofactor. Activated by phosphorylation.

The enzyme catalyses alpha-D-glucosamine 1-phosphate = D-glucosamine 6-phosphate. Catalyzes the conversion of glucosamine-6-phosphate to glucosamine-1-phosphate. This chain is Phosphoglucosamine mutase, found in Listeria innocua serovar 6a (strain ATCC BAA-680 / CLIP 11262).